A 144-amino-acid polypeptide reads, in one-letter code: D-aminoacyl-tRNA deacylase (144 aa).

A Gly-cisPro motif, important for rejection of L-amino acids motif is present at residues 136–137; the sequence is GP.

Belongs to the DTD family. As to quaternary structure, homodimer.

It is found in the cytoplasm. The enzyme catalyses glycyl-tRNA(Ala) + H2O = tRNA(Ala) + glycine + H(+). It catalyses the reaction a D-aminoacyl-tRNA + H2O = a tRNA + a D-alpha-amino acid + H(+). Its function is as follows. An aminoacyl-tRNA editing enzyme that deacylates mischarged D-aminoacyl-tRNAs. Also deacylates mischarged glycyl-tRNA(Ala), protecting cells against glycine mischarging by AlaRS. Acts via tRNA-based rather than protein-based catalysis; rejects L-amino acids rather than detecting D-amino acids in the active site. By recycling D-aminoacyl-tRNA to D-amino acids and free tRNA molecules, this enzyme counteracts the toxicity associated with the formation of D-aminoacyl-tRNA entities in vivo and helps enforce protein L-homochirality. In Haemophilus influenzae (strain PittEE), this protein is D-aminoacyl-tRNA deacylase.